Here is a 369-residue protein sequence, read N- to C-terminus: O-methyltransferase 12 (369 aa).

Residues Gly-181, Asp-204, 229–231, Asp-230, Phe-231, and Lys-244 contribute to the S-adenosyl-L-methionine site; that span reads GDF. His-248 acts as the Proton acceptor in catalysis.

This sequence belongs to the class I-like SAM-binding methyltransferase superfamily. Cation-independent O-methyltransferase family. COMT subfamily.

It catalyses the reaction resorcinol + S-adenosyl-L-methionine = 3-methoxyphenol + S-adenosyl-L-homocysteine + H(+). S-adenosyl-L-methionine dependent O-methyltransferase that may be involved in modifying resorcinol ring to synthesize a variant of 4-methyl-5-pentylbenzene-1,3-diol. This Dictyostelium discoideum (Social amoeba) protein is O-methyltransferase 12 (omt12).